The following is a 185-amino-acid chain: Ribosome-recycling factor (185 aa).

It belongs to the RRF family.

Its subcellular location is the cytoplasm. Responsible for the release of ribosomes from messenger RNA at the termination of protein biosynthesis. May increase the efficiency of translation by recycling ribosomes from one round of translation to another. This is Ribosome-recycling factor from Pseudomonas fluorescens (strain ATCC BAA-477 / NRRL B-23932 / Pf-5).